The chain runs to 303 residues: Recombination-associated protein RdgC (303 aa).

The protein belongs to the RdgC family.

The protein resides in the cytoplasm. Its subcellular location is the nucleoid. Functionally, may be involved in recombination. This Salmonella agona (strain SL483) protein is Recombination-associated protein RdgC.